Reading from the N-terminus, the 480-residue chain is Protein nucleotidyltransferase YdiU (480 aa).

ATP contacts are provided by G86, G88, R89, K109, D121, G122, R172, and R179. The active-site Proton acceptor is D248. N249 and D258 together coordinate Mg(2+). D258 contributes to the ATP binding site.

This sequence belongs to the SELO family. Requires Mg(2+) as cofactor. Mn(2+) serves as cofactor.

It carries out the reaction L-seryl-[protein] + ATP = 3-O-(5'-adenylyl)-L-seryl-[protein] + diphosphate. It catalyses the reaction L-threonyl-[protein] + ATP = 3-O-(5'-adenylyl)-L-threonyl-[protein] + diphosphate. The catalysed reaction is L-tyrosyl-[protein] + ATP = O-(5'-adenylyl)-L-tyrosyl-[protein] + diphosphate. The enzyme catalyses L-histidyl-[protein] + UTP = N(tele)-(5'-uridylyl)-L-histidyl-[protein] + diphosphate. It carries out the reaction L-seryl-[protein] + UTP = O-(5'-uridylyl)-L-seryl-[protein] + diphosphate. It catalyses the reaction L-tyrosyl-[protein] + UTP = O-(5'-uridylyl)-L-tyrosyl-[protein] + diphosphate. Its function is as follows. Nucleotidyltransferase involved in the post-translational modification of proteins. It can catalyze the addition of adenosine monophosphate (AMP) or uridine monophosphate (UMP) to a protein, resulting in modifications known as AMPylation and UMPylation. The polypeptide is Protein nucleotidyltransferase YdiU (Salmonella schwarzengrund (strain CVM19633)).